Reading from the N-terminus, the 61-residue chain is Small ribosomal subunit protein uS14 (61 aa).

Positions 24, 27, 40, and 43 each coordinate Zn(2+).

The protein belongs to the universal ribosomal protein uS14 family. Zinc-binding uS14 subfamily. As to quaternary structure, part of the 30S ribosomal subunit. Contacts proteins S3 and S10. The cofactor is Zn(2+).

Binds 16S rRNA, required for the assembly of 30S particles and may also be responsible for determining the conformation of the 16S rRNA at the A site. This chain is Small ribosomal subunit protein uS14, found in Staphylococcus aureus (strain USA300 / TCH1516).